The chain runs to 123 residues: Large ribosomal subunit protein uL29 (123 aa).

Belongs to the universal ribosomal protein uL29 family.

The protein is Large ribosomal subunit protein uL29 (RPL35) of Theileria parva (East coast fever infection agent).